We begin with the raw amino-acid sequence, 384 residues long: Zinc transporter 7 (384 aa).

The N-terminal stretch at 1–25 (MERFVQFLRRGNGLMAASLAAGSCA) is a signal peptide. The Extracellular segment spans residues 26–46 (EEVAKAEGAGCRDDAAALRLK). The helical transmembrane segment at 47-67 (GVAMATILVAGVVGVGLPLAG) threads the bilayer. Residues 68-79 (RKRRALRTDSAA) are Cytoplasmic-facing. The chain crosses the membrane as a helical span at residues 80-100 (FVAAKAFAAGVILATGFVHML). Residues 101-119 (HDAEHALSSPCLPAHPWRS) lie on the Extracellular side of the membrane. A helical membrane pass occupies residues 120 to 140 (FPFPGFVAMSAALATLVLDFL). Residues 141–227 (ATRFYEGKHR…GEGEVPAQVR (87 aa)) are Cytoplasmic-facing. The interval 185–222 (DNKAPLLQPHSHSHSHPHGHGHGHELAQPEGSGGEGEV) is disordered. The span at 195 to 205 (SHSHSHPHGHG) shows a compositional bias: basic residues. The helical transmembrane segment at 228-248 (SVVVSQILEMGIVSHSVIIGL) threads the bilayer. At 249–261 (SLGVSRSPCTIRP) the chain is on the extracellular side. The helical transmembrane segment at 262–282 (LVAALSFHQFFEGFALGGCIA) threads the bilayer. At 283-291 (QAQFKTLSA) the chain is on the cytoplasmic side. The helical transmembrane segment at 292–312 (AIMACFFAITTPAGIAAGAGV) threads the bilayer. The Extracellular segment spans residues 313–323 (ASFYNANSPRA). Residues 324–344 (LVVEGILDSVSAGILIYMSLV) form a helical membrane-spanning segment. Residues 345 to 363 (DLIAADFLGGKMTGSTRQQ) are Cytoplasmic-facing. Residues 364–384 (VMAYIALFLGALSMSSLAIWA) form a helical membrane-spanning segment.

The protein belongs to the ZIP transporter (TC 2.A.5) family.

The protein resides in the cell membrane. Zinc transporter that may be involved in zinc uptake from the rhizosphere. This chain is Zinc transporter 7 (ZIP7), found in Oryza sativa subsp. japonica (Rice).